The sequence spans 552 residues: uncharacterized protein (552 aa).

The next 4 helical transmembrane spans lie at 127-147, 160-180, 393-413, and 517-537; these read AIML…ISLL, LIIV…YINI, LTKQ…LSAV, and VIDS…FICI.

It is found in the membrane. This is an uncharacterized protein from Saccharomyces cerevisiae (strain ATCC 204508 / S288c) (Baker's yeast).